The primary structure comprises 791 residues: MATRSVSMKQTSQRAASPNKTQGAKKWSAVAARGSKIAQSATNDHRNVESIKVVPENRVRGGVAAKATDSSSNVTSLASSEENVSSVSGSAKSNNSQQRVWKTDVAISAEKRTETRQRELRRWMPDPEDAGVPLAGLEESTDNVEWDQFATNEKLFGVKSHFDEDLYTSRIDRSHPKYKEKEQEADRIAKEIEGTVTNNIHIAEERGLKVDDSGLDEEDLYSGVHRSIDVVRNYTRSNAYNKNNKDQKPKNHEAPHQHPQQKVVPPDDPAIVSHRHLALPRAPGPDSRAAERFFNARRKAGPLSRREKEGQIKEFMQFSQSLKIGSLDSKQPSSTKSVAEVKVADEKQLPDASSQATPADSKEPRKEEAEKPVTSATEVSSEKVEKVDGNTSSPSKEEEKPSTEPEKPSVVTQRKETTGTKLGTKLNAKAISFKPNVAAPVFTPGKFTIPSKPAPVNASRPMMPQQSNNSEASIPSTTPQSPSVVSNGENKPSSSPVFFNGPVSSEKEPILDNFNVFKNVGEEHQGAEQIDKPFSCPPTWNTGPNSLQQTIANSRPEGNSGSAKKAAAANPMIPSIVLPNSAMPSAMPMYPTPTMPYIPVGYPVPGYTPYMRNPSQHTSVAPSPNGTPTSGNSSTVGSPMIGYMAPQFIPPYAMPQFPPSGNGRGASAPATYFVPQMGGMMAYTMNGVPPMYGQYAPNNGMMNMHYPMYGDSRRSNSQRSFNSSNGKRSNVHKNNNASNTFSHSNASTSSSLNAAPNTTAKSSSQTAPPVSKGDATEKTEKDASANQEAKP.

Positions 1–22 (MATRSVSMKQTSQRAASPNKTQ) are enriched in polar residues. 8 disordered regions span residues 1–28 (MATRSVSMKQTSQRAASPNKTQGAKKWS), 60–100 (RGGV…QQRV), 112–134 (RTETRQRELRRWMPDPEDAGVPL), 235–311 (TRSN…KEGQ), 326–423 (SLDS…TKLG), 452–505 (KPAP…PVSS), 613–634 (NPSQHTSVAPSPNGTPTSGNSS), and 707–791 (PMYG…EAKP). A compositionally biased stretch (low complexity) spans 76–96 (SLASSEENVSSVSGSAKSNNS). Composition is skewed to basic and acidic residues over residues 112–125 (RTETRQRELRRWMP) and 243–256 (NNKDQKPKNHEAPH). Positions 326 to 337 (SLDSKQPSSTKS) are enriched in polar residues. 2 stretches are compositionally biased toward basic and acidic residues: residues 360–371 (DSKEPRKEEAEK) and 395–418 (SKEEEKPSTEPEKPSVVTQRKETT). The segment covering 473–486 (SIPSTTPQSPSVVS) has biased composition (low complexity). The span at 487–497 (NGENKPSSSPV) shows a compositional bias: polar residues. Composition is skewed to low complexity over residues 715-725 (SNSQRSFNSSN) and 734-760 (NNNASNTFSHSNASTSSSLNAAPNTTA). Positions 774 to 791 (DATEKTEKDASANQEAKP) are enriched in basic and acidic residues.

It belongs to the ataxin-2 family. As to quaternary structure, interacts with mkt1.

It localises to the cytoplasm. Its function is as follows. Involved in post-transcriptional regulation of gene expression, probably by association with mkt1. The protein is Ataxin-2 homolog of Schizosaccharomyces pombe (strain 972 / ATCC 24843) (Fission yeast).